A 48-amino-acid polypeptide reads, in one-letter code: Disintegrin leucogastin-A (48 aa).

The Disintegrin domain occupies 1–47; that stretch reads DCASGPCCRDCKFLEEFTICNMARGDDMNDYCNGKTCDCPRNPHKWP. 4 cysteine pairs are disulfide-bonded: C2–C11, C7–C32, C8–C37, and C20–C39. Positions 24-26 match the Cell attachment site motif; sequence RGD.

The protein belongs to the venom metalloproteinase (M12B) family. P-II subfamily. P-IIa sub-subfamily. As to quaternary structure, monomer (disintegrin). In terms of tissue distribution, expressed by the venom gland.

The protein localises to the secreted. Inhibits ADP-induced human platelet aggregation. This is Disintegrin leucogastin-A from Echis leucogaster (Roman's saw-scaled viper).